The following is a 173-amino-acid chain: Photosystem I assembly protein Ycf3 (173 aa).

TPR repeat units follow at residues 35–68, 72–105, and 120–153; these read AFYY…EKDP, SFIL…NPNL, and GNKL…APYN.

It belongs to the Ycf3 family.

It localises to the plastid. It is found in the chloroplast thylakoid membrane. In terms of biological role, essential for the assembly of the photosystem I (PSI) complex. May act as a chaperone-like factor to guide the assembly of the PSI subunits. The protein is Photosystem I assembly protein Ycf3 of Cyanidium caldarium (Red alga).